The following is a 397-amino-acid chain: Tryptophan synthase beta chain (397 aa).

Lys-88 bears the N6-(pyridoxal phosphate)lysine mark.

It belongs to the TrpB family. In terms of assembly, tetramer of two alpha and two beta chains. It depends on pyridoxal 5'-phosphate as a cofactor.

It carries out the reaction (1S,2R)-1-C-(indol-3-yl)glycerol 3-phosphate + L-serine = D-glyceraldehyde 3-phosphate + L-tryptophan + H2O. Its pathway is amino-acid biosynthesis; L-tryptophan biosynthesis; L-tryptophan from chorismate: step 5/5. Its function is as follows. The beta subunit is responsible for the synthesis of L-tryptophan from indole and L-serine. The chain is Tryptophan synthase beta chain from Haemophilus influenzae (strain PittEE).